The chain runs to 398 residues: 1-deoxy-D-xylulose 5-phosphate reductoisomerase (398 aa).

8 residues coordinate NADPH: Thr-10, Gly-11, Ser-12, Val-13, Gly-36, Arg-37, Asn-38, and Asn-124. Lys-125 serves as a coordination point for 1-deoxy-D-xylulose 5-phosphate. Glu-126 is an NADPH binding site. A Mn(2+)-binding site is contributed by Asp-150. Positions 151, 152, 186, and 209 each coordinate 1-deoxy-D-xylulose 5-phosphate. Glu-152 contacts Mn(2+). Residue Gly-215 coordinates NADPH. The 1-deoxy-D-xylulose 5-phosphate site is built by Ser-222, Asn-227, Lys-228, and Glu-231. Glu-231 contributes to the Mn(2+) binding site.

It belongs to the DXR family. As to quaternary structure, homodimer. Mg(2+) is required as a cofactor. The cofactor is Mn(2+).

It catalyses the reaction 2-C-methyl-D-erythritol 4-phosphate + NADP(+) = 1-deoxy-D-xylulose 5-phosphate + NADPH + H(+). It participates in isoprenoid biosynthesis; isopentenyl diphosphate biosynthesis via DXP pathway; isopentenyl diphosphate from 1-deoxy-D-xylulose 5-phosphate: step 1/6. In terms of biological role, catalyzes the NADPH-dependent rearrangement and reduction of 1-deoxy-D-xylulose-5-phosphate (DXP) to 2-C-methyl-D-erythritol 4-phosphate (MEP). The polypeptide is 1-deoxy-D-xylulose 5-phosphate reductoisomerase (Serratia proteamaculans (strain 568)).